The primary structure comprises 181 residues: Adenine phosphoribosyltransferase (181 aa).

The protein belongs to the purine/pyrimidine phosphoribosyltransferase family. As to quaternary structure, homodimer.

The protein resides in the cytoplasm. The enzyme catalyses AMP + diphosphate = 5-phospho-alpha-D-ribose 1-diphosphate + adenine. The protein operates within purine metabolism; AMP biosynthesis via salvage pathway; AMP from adenine: step 1/1. Catalyzes a salvage reaction resulting in the formation of AMP, that is energically less costly than de novo synthesis. The chain is Adenine phosphoribosyltransferase from Shewanella woodyi (strain ATCC 51908 / MS32).